A 202-amino-acid chain; its full sequence is Inner membrane-spanning protein YciB (202 aa).

6 helical membrane passes run 3–23 (FFLD…AGAA), 46–66 (ILIA…IVWL), 74–94 (MLWV…VFHN), 100–120 (WKPT…ALLF), 145–165 (LAWI…AYGY), and 173–193 (FKLF…GFYL).

This sequence belongs to the YciB family.

The protein localises to the cell inner membrane. Plays a role in cell envelope biogenesis, maintenance of cell envelope integrity and membrane homeostasis. The sequence is that of Inner membrane-spanning protein YciB from Azoarcus sp. (strain BH72).